Reading from the N-terminus, the 298-residue chain is ADP/ATP translocase 1 (298 aa).

Topologically, residues 1–7 are mitochondrial intermembrane; the sequence is MGDQALS. Glycine 2 is modified (N-acetylglycine). Residues 6–98 form a Solcar 1 repeat; the sequence is LSFLKDFLAG…FAFKDKYKQI (93 aa). Serine 7 is modified (phosphoserine). The chain crosses the membrane as a helical span at residues 8–37; it reads FLKDFLAGGIAAAVSKTAVAPIERVKLLLQ. Residues 38–74 lie on the Mitochondrial matrix side of the membrane; it reads VQHASKQISAEKQYKGIIDCVVRIPKEQGFLSFWRGN. At lysine 52 the chain carries N6,N6,N6-trimethyllysine. A helical transmembrane segment spans residues 75-99; that stretch reads LANVIRYFPTQALNFAFKDKYKQIF. Positions 80 and 92 each coordinate ADP. Residues 100–109 lie on the Mitochondrial intermembrane side of the membrane; that stretch reads LGGVDRHKQF. The helical transmembrane segment at 110–130 threads the bilayer; the sequence is WRYFAGNLASGGAAGATSLCF. 2 Solcar repeats span residues 111–201 and 212–297; these read RYFA…AKGM and VSWM…IKKY. The Mitochondrial matrix segment spans residues 131–178; that stretch reads VYPLDFARTRLAADVGKGSSQREFNGLGDCLTKIFKSDGLKGLYQGFS. Position 147 is an N6-succinyllysine (lysine 147). 2 positions are modified to phosphoserine: serine 149 and serine 150. S-nitrosocysteine is present on cysteine 160. A helical membrane pass occupies residues 179-199; it reads VSVQGIIIYRAAYFGVYDTAK. Residues 200–210 are Mitochondrial intermembrane-facing; the sequence is GMLPDPKNVHI. A helical transmembrane segment spans residues 211 to 231; sequence IVSWMIAQSVTAVAGLVSYPF. The Mitochondrial matrix segment spans residues 232 to 273; sequence DTVRRRMMMQSGRKGADIMYTGTVDCWRKIAKDEGRKAFFKG. Arginine 235 contacts ADP. An important for transport activity region spans residues 235-240; that stretch reads RRRMMM. The short motif at 235-240 is the Nucleotide carrier signature motif element; sequence RRRMMM. Lysine 245 and lysine 272 each carry N6-succinyllysine. Residues 274-291 traverse the membrane as a helical segment; the sequence is AWSNVLRGMGGAFVLVLY. The Mitochondrial intermembrane segment spans residues 292–298; it reads DEIKKYV.

It belongs to the mitochondrial carrier (TC 2.A.29) family. In terms of assembly, monomer. Found in a complex with ARL2, ARL2BP and SLC25A4/ANT1. Interacts with ARL2BP. Interacts with TIMM44; leading to inhibit the presequence translocase TIMM23, thereby promoting stabilization of PINK1. Under cell death induction, transglutaminated by TGM2. Transglutamination leads to formation of covalent cross-links between a glutamine and the epsilon-amino group of a lysine residue, forming polymers.

The protein localises to the mitochondrion inner membrane. The protein resides in the membrane. The catalysed reaction is ADP(in) + ATP(out) = ADP(out) + ATP(in). It carries out the reaction H(+)(in) = H(+)(out). With respect to regulation, the matrix-open state (m-state) is inhibited by the membrane-permeable bongkrekic acid (BKA). The cytoplasmic-open state (c-state) is inhibited by the membrane-impermeable toxic inhibitor carboxyatractyloside (CATR). Proton transporter activity is inhibited by ADP:ATP antiporter activity. In terms of biological role, ADP:ATP antiporter that mediates import of ADP into the mitochondrial matrix for ATP synthesis, and export of ATP out to fuel the cell. Cycles between the cytoplasmic-open state (c-state) and the matrix-open state (m-state): operates by the alternating access mechanism with a single substrate-binding site intermittently exposed to either the cytosolic (c-state) or matrix (m-state) side of the inner mitochondrial membrane. In addition to its ADP:ATP antiporter activity, also involved in mitochondrial uncoupling and mitochondrial permeability transition pore (mPTP) activity. Plays a role in mitochondrial uncoupling by acting as a proton transporter: proton transport uncouples the proton flows via the electron transport chain and ATP synthase to reduce the efficiency of ATP production and cause mitochondrial thermogenesis. Proton transporter activity is inhibited by ADP:ATP antiporter activity, suggesting that SLC25A4/ANT1 acts as a master regulator of mitochondrial energy output by maintaining a delicate balance between ATP production (ADP:ATP antiporter activity) and thermogenesis (proton transporter activity). Proton transporter activity requires free fatty acids as cofactor, but does not transport it. Also plays a key role in mPTP opening, a non-specific pore that enables free passage of the mitochondrial membranes to solutes of up to 1.5 kDa, and which contributes to cell death. It is however unclear if SLC25A4/ANT1 constitutes a pore-forming component of mPTP or regulates it. Acts as a regulator of mitophagy independently of ADP:ATP antiporter activity: promotes mitophagy via interaction with TIMM44, leading to inhibit the presequence translocase TIMM23, thereby promoting stabilization of PINK1. The protein is ADP/ATP translocase 1 of Rattus norvegicus (Rat).